The following is a 403-amino-acid chain: MLTQKTKDIVKATAPVLAQHGYAIIQHFYKRMFQAHPELKNIFNMAHQERGEQQQALARAVYAYAANIENPESLSAVLKDIAHKHASLGVRPEQYPIVGEHLLASIKEVLGDAATDEIISAWAQAYGNLADILAGMESELYERSEERAGGWAGWRRFIVREKNPESDVITSFVLEPADGGPVADFEPGQYTSVAVQVPKLGYQQIRQYSLSDSPNGRSYRISVKREDGGLGTPGYVSSLLHDEINVGDELKLAAPYGNFYIDVSATTPIVLISGGVGLTPMVSMLKKALQTPPRKVVFVHGARNSAVHAMRDRLKEASRTYPDFKLFIFYDEPLPTDIEGRDYDFAGLVDVEKVKDSILLDDADYYICGPVPFMRMQHDKLLGLGITEARIHYEVFGPDLFAE.

The Globin domain maps to 1–138; it reads MLTQKTKDIV…LADILAGMES (138 aa). H85 contacts heme b. Residues Y95 and E137 each act as charge relay system in the active site. The segment at 149–403 is reductase; sequence GGWAGWRRFI…EVFGPDLFAE (255 aa). The region spanning 152–262 is the FAD-binding FR-type domain; it reads AGWRRFIVRE…AAPYGNFYID (111 aa). FAD is bound by residues Y190 and 206-209; that span reads RQYS. NADP(+) is bound at residue 275–280; the sequence is GVGLTP. 395 to 398 provides a ligand contact to FAD; it reads VFGP.

It belongs to the globin family. Two-domain flavohemoproteins subfamily. In the C-terminal section; belongs to the flavoprotein pyridine nucleotide cytochrome reductase family. The cofactor is heme b. FAD serves as cofactor.

The catalysed reaction is 2 nitric oxide + NADPH + 2 O2 = 2 nitrate + NADP(+) + H(+). It catalyses the reaction 2 nitric oxide + NADH + 2 O2 = 2 nitrate + NAD(+) + H(+). Its function is as follows. Is involved in NO detoxification in an aerobic process, termed nitric oxide dioxygenase (NOD) reaction that utilizes O(2) and NAD(P)H to convert NO to nitrate, which protects the bacterium from various noxious nitrogen compounds. Therefore, plays a central role in the inducible response to nitrosative stress. The polypeptide is Flavohemoprotein (Rhizobium meliloti (strain 1021) (Ensifer meliloti)).